Reading from the N-terminus, the 562-residue chain is Sulfite reductase [NADPH] hemoprotein beta-component (562 aa).

[4Fe-4S] cluster-binding residues include Cys-425, Cys-431, Cys-470, and Cys-474. Residue Cys-474 coordinates siroheme.

The protein belongs to the nitrite and sulfite reductase 4Fe-4S domain family. In terms of assembly, alpha(8)-beta(8). The alpha component is a flavoprotein, the beta component is a hemoprotein. Siroheme serves as cofactor. Requires [4Fe-4S] cluster as cofactor.

It carries out the reaction hydrogen sulfide + 3 NADP(+) + 3 H2O = sulfite + 3 NADPH + 4 H(+). Its pathway is sulfur metabolism; hydrogen sulfide biosynthesis; hydrogen sulfide from sulfite (NADPH route): step 1/1. In terms of biological role, component of the sulfite reductase complex that catalyzes the 6-electron reduction of sulfite to sulfide. This is one of several activities required for the biosynthesis of L-cysteine from sulfate. The polypeptide is Sulfite reductase [NADPH] hemoprotein beta-component (Tolumonas auensis (strain DSM 9187 / NBRC 110442 / TA 4)).